A 212-amino-acid chain; its full sequence is uncharacterized protein (212 aa).

It belongs to the mimivirus R683/R861 family.

This is an uncharacterized protein from Acanthamoeba polyphaga (Amoeba).